We begin with the raw amino-acid sequence, 116 residues long: Ribosome-binding factor A (116 aa).

The protein belongs to the RbfA family. In terms of assembly, monomer. Binds 30S ribosomal subunits, but not 50S ribosomal subunits or 70S ribosomes.

The protein localises to the cytoplasm. Functionally, one of several proteins that assist in the late maturation steps of the functional core of the 30S ribosomal subunit. Associates with free 30S ribosomal subunits (but not with 30S subunits that are part of 70S ribosomes or polysomes). Required for efficient processing of 16S rRNA. May interact with the 5'-terminal helix region of 16S rRNA. In Streptococcus pneumoniae (strain ATCC 700669 / Spain 23F-1), this protein is Ribosome-binding factor A.